A 194-amino-acid chain; its full sequence is Large ribosomal subunit protein bL9 (194 aa).

The tract at residues 148–194 is disordered; the sequence is QDEAERQARGENVINSQFEEDRAAEAEAAQDMAEGGAGSFEGDHYEA.

This sequence belongs to the bacterial ribosomal protein bL9 family.

Its function is as follows. Binds to the 23S rRNA. In Caulobacter vibrioides (strain ATCC 19089 / CIP 103742 / CB 15) (Caulobacter crescentus), this protein is Large ribosomal subunit protein bL9.